The chain runs to 215 residues: UPF0323 lipoprotein HP_0232 (215 aa).

The N-terminal stretch at 1–27 (MKKPYRKISDYAIVGGLSALVMVSIVG) is a signal peptide. A lipid anchor (N-palmitoyl cysteine) is attached at Cys28. Cys28 carries the S-diacylglycerol cysteine lipid modification. The span at 158–169 (QRTYKSPQAYQR) shows a compositional bias: polar residues. The interval 158 to 215 (QRTYKSPQAYQRSQNSFSKSAPSASSMGGASKGQSGFFGSSRPTSSPAVSSGTRGFNS) is disordered. Low complexity predominate over residues 170–208 (SQNSFSKSAPSASSMGGASKGQSGFFGSSRPTSSPAVSS).

This sequence belongs to the UPF0323 family.

It is found in the cell membrane. This Helicobacter pylori (strain ATCC 700392 / 26695) (Campylobacter pylori) protein is UPF0323 lipoprotein HP_0232.